The primary structure comprises 317 residues: uncharacterized protein (317 aa).

The next 7 membrane-spanning stretches (helical) occupy residues 18 to 38, 58 to 78, 92 to 112, 130 to 150, 159 to 179, 202 to 222, and 252 to 272; these read FWLISLVVAFLPLGLYGLVII, IILSWMLFFLWFNVIVNGFIF, FLGSFIYSGGNNFGGVSWWSF, LFSASFLLTTSSSIYELAWAV, LFHIKVQPISILLAVIFKLLP, CSFLNPFKIKTLFIPVLLSTV, and NLLNGVFLLVGLLLFSILLIA.

This sequence belongs to the CbiQ family.

The protein resides in the cell membrane. This is an uncharacterized protein from Mycoplasma genitalium (strain ATCC 33530 / DSM 19775 / NCTC 10195 / G37) (Mycoplasmoides genitalium).